Reading from the N-terminus, the 178-residue chain is Endothelin-2 (178 aa).

An N-terminal signal peptide occupies residues 1–26; that stretch reads MVAMPTAWCSIALALLLALHEGKGQV. A propeptide spanning residues 27 to 46 is cleaved from the precursor; sequence AAAPDQPAPSHRARASHLRP. Disulfide bonds link Cys-49/Cys-63 and Cys-51/Cys-59. Positions 70–178 are excised as a propeptide; that stretch reads VNTPGQTAPY…RPTHSRRWKR (109 aa). The tract at residues 96-111 is endothelin-like; sequence CECSSGRDPACATFCH.

Belongs to the endothelin/sarafotoxin family.

It localises to the secreted. In terms of biological role, endothelins are endothelium-derived vasoconstrictor peptides. This Felis catus (Cat) protein is Endothelin-2 (EDN2).